The following is a 155-amino-acid chain: FUN14 domain-containing protein 1 (155 aa).

Over Met-1–Lys-47 the chain is Cytoplasmic. At Ser-13 the chain carries Phosphoserine; by CK2. Ser-17 carries the post-translational modification Phosphoserine; by ULK1. A Phosphotyrosine; by SRC modification is found at Tyr-18. Positions Tyr-18–Leu-21 match the YXXL motif. The chain crosses the membrane as a helical span at residues Tyr-48 to Phe-68. Residues Gln-69 to Leu-74 lie on the Mitochondrial intermembrane side of the membrane. Residues Ala-75–Val-95 traverse the membrane as a helical segment. The Cytoplasmic portion of the chain corresponds to Gln-96–Glu-133. Residue Lys-119 forms a Glycyl lysine isopeptide (Lys-Gly) (interchain with G-Cter in ubiquitin) linkage. Residues Phe-134–Ala-154 traverse the membrane as a helical segment. Position 155 (Ser-155) is a topological domain, mitochondrial intermembrane.

This sequence belongs to the FUN14 family. Interacts (via YXXL motif) with MAP1 LC3 family proteins MAP1LC3A, MAP1LC3B and GABARAP. Interacts with DNM1L/DPR1. Interacts with GPX4. Post-translationally, phosphorylation at Ser-13 by CK2 and at Tyr-18 by SRC inhibits activation of mitophagy. Following hypoxia, dephosphorylated at Tyr-18, leading to interaction with MAP1 LC3 family proteins and triggering mitophagy. Dephosphorylation is mediated by PGAM5. Phosphorylated by ULK1 at Ser-17 which enhances FUNDC1 binding to LC3. Ubiquitinated on Lys-119. Deubiquitinated by USP19; leading to hypoxia-induced DRP1 oligomerization and GTPase activity. As to expression, widely expressed.

The protein localises to the mitochondrion outer membrane. Integral mitochondrial outer-membrane protein that mediates the formation of mitochondria-associated endoplasmic reticulum membranes (MAMs). In turn, mediates angiogenesis and neoangiogenesis through interference with intracellular Ca(2+) communication and regulation of the vascular endothelial growth factor receptor KDR/VEGFR2 expression at both mRNA and protein levels. Also acts as an activator of hypoxia-induced mitophagy, an important mechanism for mitochondrial quality and homeostasis, by interacting with and recruiting LC3 protein family to mitochondria. Mechanistically, recruits DRP1 at ER-mitochondria contact sites leading to DRP1 oligomerization and GTPase activity to facilitate mitochondrial fission during hypoxia. Additionally, plays a role in hepatic ferroptosis by interacting directly with glutathione peroxidase/GPX4 to facilitate its recruitment into mitochondria through TOM/TIM complex where it is degraded by mitophagy. The protein is FUN14 domain-containing protein 1 (FUNDC1) of Homo sapiens (Human).